The primary structure comprises 357 residues: 3-dehydroquinate synthase (357 aa).

Residues 104–108 (GVVGD), 128–129 (TT), lysine 141, and 168–171 (FLET) each bind NAD(+). Glutamate 183, histidine 243, and histidine 260 together coordinate Zn(2+).

It belongs to the sugar phosphate cyclases superfamily. Dehydroquinate synthase family. The cofactor is NAD(+). Co(2+) is required as a cofactor. It depends on Zn(2+) as a cofactor.

The protein resides in the cytoplasm. It carries out the reaction 7-phospho-2-dehydro-3-deoxy-D-arabino-heptonate = 3-dehydroquinate + phosphate. Its pathway is metabolic intermediate biosynthesis; chorismate biosynthesis; chorismate from D-erythrose 4-phosphate and phosphoenolpyruvate: step 2/7. In terms of biological role, catalyzes the conversion of 3-deoxy-D-arabino-heptulosonate 7-phosphate (DAHP) to dehydroquinate (DHQ). This chain is 3-dehydroquinate synthase, found in Streptococcus pyogenes serotype M3 (strain ATCC BAA-595 / MGAS315).